A 345-amino-acid chain; its full sequence is Phosphoribosylformylglycinamidine cyclo-ligase (345 aa).

Belongs to the AIR synthase family.

The protein resides in the cytoplasm. It carries out the reaction 2-formamido-N(1)-(5-O-phospho-beta-D-ribosyl)acetamidine + ATP = 5-amino-1-(5-phospho-beta-D-ribosyl)imidazole + ADP + phosphate + H(+). It functions in the pathway purine metabolism; IMP biosynthesis via de novo pathway; 5-amino-1-(5-phospho-D-ribosyl)imidazole from N(2)-formyl-N(1)-(5-phospho-D-ribosyl)glycinamide: step 2/2. This Histophilus somni (strain 129Pt) (Haemophilus somnus) protein is Phosphoribosylformylglycinamidine cyclo-ligase.